A 286-amino-acid polypeptide reads, in one-letter code: 4-hydroxybenzoate octaprenyltransferase (286 aa).

9 helical membrane passes run 19–39 (AGWL…SHGF), 42–62 (WHLL…GCCV), 92–112 (ALVL…TTNA), 115–135 (IAWS…KRYV), 137–157 (MPQA…FAAV), 161–181 (VPLL…AYDT), 206–226 (FDVA…ALAL), 233–253 (AIYW…GWLI), and 264–284 (AFRL…LSYL).

The protein belongs to the UbiA prenyltransferase family. The cofactor is Mg(2+).

It is found in the cell inner membrane. It carries out the reaction all-trans-octaprenyl diphosphate + 4-hydroxybenzoate = 4-hydroxy-3-(all-trans-octaprenyl)benzoate + diphosphate. It participates in cofactor biosynthesis; ubiquinone biosynthesis. Catalyzes the prenylation of para-hydroxybenzoate (PHB) with an all-trans polyprenyl group. Mediates the second step in the final reaction sequence of ubiquinone-8 (UQ-8) biosynthesis, which is the condensation of the polyisoprenoid side chain with PHB, generating the first membrane-bound Q intermediate 3-octaprenyl-4-hydroxybenzoate. The protein is 4-hydroxybenzoate octaprenyltransferase of Polaromonas sp. (strain JS666 / ATCC BAA-500).